The following is a 279-amino-acid chain: Proto-oncogene FRAT1 (279 aa).

Disordered stretches follow at residues 1 to 24 and 56 to 76; these read MPCRREEEEEAGEEAEGEEEEEDS and AQHSPASPCGPPGAPLRAPGP. Acidic residues predominate over residues 7–24; sequence EEEEAGEEAEGEEEEEDS. Ser88 carries the post-translational modification Phosphoserine. Disordered stretches follow at residues 136–200 and 228–279; these read GPSA…DDPH and RAKL…VPGS. Residues 198 to 220 form an involved in GSK-3 binding region; it reads DPHRLLQQLVLSGNLIKEAVRRL. Phosphoserine occurs at positions 249 and 252.

It belongs to the GSK-3-binding protein family. In terms of assembly, binds DVL1. Binds GSK-3 and prevent GSK-3-dependent phosphorylation. Phosphorylated.

The protein localises to the cytoplasm. Functionally, positively regulates the Wnt signaling pathway by stabilizing beta-catenin through the association with GSK-3. May play a role in tumor progression and collaborate with PIM1 and MYC in lymphomagenesis. The polypeptide is Proto-oncogene FRAT1 (FRAT1) (Homo sapiens (Human)).